Consider the following 290-residue polypeptide: ATP synthase gamma chain (290 aa).

It belongs to the ATPase gamma chain family. In terms of assembly, F-type ATPases have 2 components, CF(1) - the catalytic core - and CF(0) - the membrane proton channel. CF(1) has five subunits: alpha(3), beta(3), gamma(1), delta(1), epsilon(1). CF(0) has three main subunits: a, b and c.

It localises to the cell inner membrane. Its function is as follows. Produces ATP from ADP in the presence of a proton gradient across the membrane. The gamma chain is believed to be important in regulating ATPase activity and the flow of protons through the CF(0) complex. This Anaeromyxobacter dehalogenans (strain 2CP-1 / ATCC BAA-258) protein is ATP synthase gamma chain.